Reading from the N-terminus, the 704-residue chain is Elongation factor G (704 aa).

Residues 8–290 (EKYRNIGICA…GVVRYLPAPN (283 aa)) form the tr-type G domain. GTP is bound by residues 17 to 24 (AHVDAGKT), 88 to 92 (DTPGH), and 142 to 145 (NKMD).

This sequence belongs to the TRAFAC class translation factor GTPase superfamily. Classic translation factor GTPase family. EF-G/EF-2 subfamily.

It localises to the cytoplasm. In terms of biological role, catalyzes the GTP-dependent ribosomal translocation step during translation elongation. During this step, the ribosome changes from the pre-translocational (PRE) to the post-translocational (POST) state as the newly formed A-site-bound peptidyl-tRNA and P-site-bound deacylated tRNA move to the P and E sites, respectively. Catalyzes the coordinated movement of the two tRNA molecules, the mRNA and conformational changes in the ribosome. The chain is Elongation factor G from Francisella tularensis subsp. tularensis (strain FSC 198).